The primary structure comprises 273 residues: Formamidopyrimidine-DNA glycosylase (273 aa).

The Schiff-base intermediate with DNA role is filled by Pro2. Catalysis depends on Glu3, which acts as the Proton donor. Lys58 acts as the Proton donor; for beta-elimination activity in catalysis. Positions 92, 111, and 153 each coordinate DNA. The FPG-type zinc-finger motif lies at 238–272; it reads RVYGREGQKCFNCSSTILKTKNSGRSTFYCKTCQY. The Proton donor; for delta-elimination activity role is filled by Arg262.

This sequence belongs to the FPG family. Monomer. It depends on Zn(2+) as a cofactor.

The enzyme catalyses Hydrolysis of DNA containing ring-opened 7-methylguanine residues, releasing 2,6-diamino-4-hydroxy-5-(N-methyl)formamidopyrimidine.. The catalysed reaction is 2'-deoxyribonucleotide-(2'-deoxyribose 5'-phosphate)-2'-deoxyribonucleotide-DNA = a 3'-end 2'-deoxyribonucleotide-(2,3-dehydro-2,3-deoxyribose 5'-phosphate)-DNA + a 5'-end 5'-phospho-2'-deoxyribonucleoside-DNA + H(+). In terms of biological role, involved in base excision repair of DNA damaged by oxidation or by mutagenic agents. Acts as a DNA glycosylase that recognizes and removes damaged bases. Has a preference for oxidized purines, such as 7,8-dihydro-8-oxoguanine (8-oxoG). Has AP (apurinic/apyrimidinic) lyase activity and introduces nicks in the DNA strand. Cleaves the DNA backbone by beta-delta elimination to generate a single-strand break at the site of the removed base with both 3'- and 5'-phosphates. The polypeptide is Formamidopyrimidine-DNA glycosylase (Rickettsia canadensis (strain McKiel)).